The chain runs to 414 residues: Voltage-gated ClC-type chloride channel ClcB (414 aa).

A run of 11 helical transmembrane segments spans residues 5–25 (LVIS…FHQA), 54–74 (ALTP…YQRY), 116–136 (SAIG…SVFA), 147–167 (LWVA…PLAG), 169–189 (LFIA…PVVI), 220–240 (VQYF…PLFL), 255–275 (LLPP…SLIF), 292–312 (TPPG…AVLA), 327–347 (LFVG…WPVL), 353–373 (LLMA…APIM), and 381–401 (MTGE…ATTI).

Belongs to the chloride channel (TC 2.A.49) family. ClcB subfamily.

The protein localises to the cell inner membrane. Its function is as follows. Probably acts as an electrical shunt for an outwardly-directed proton pump that is linked to amino acid decarboxylation, as part of the extreme acid resistance (XAR) response. This Yersinia pseudotuberculosis serotype O:1b (strain IP 31758) protein is Voltage-gated ClC-type chloride channel ClcB.